Here is a 445-residue protein sequence, read N- to C-terminus: Probable D-serine dehydratase (445 aa).

Lys-111 is subject to N6-(pyridoxal phosphate)lysine.

Belongs to the serine/threonine dehydratase family. DsdA subfamily. Pyridoxal 5'-phosphate serves as cofactor.

The enzyme catalyses D-serine = pyruvate + NH4(+). In Burkholderia pseudomallei (strain 668), this protein is Probable D-serine dehydratase.